The sequence spans 357 residues: MAEVNVSLGERSYTIYIGNALLPNYVERLPHKLNQQLLVITNPTISQYYLKPLLKSLAGHQVKVFEMRDGEQFKSLDSYAEAMDILIDAGFNRDCGIIALGGGVVGDLAGFVASTFQRGVDFYQIPTTLLSQVDSSVGGKTAVNHPQGKNLIGAFYQPKSVVIDIDCLQTLTERDYRSGLAEIVKYGVIYDADFFQWLEQHAKELNQQDPAALTYAIQRSCEIKAEVVALDEREKGLRALLNLGHTFGHAIEAATEYGAWTHGEAVAAGIIIASKLSEVTQRLNSSDFRRIKDLLLALSLPTKGPQMPWQDWLDYMQRDKKVKDGQLHFVLPVAIGQAEVVSTVEHNTVTAVITECC.

NAD(+) is bound by residues 69-74 (DGEQFK), 103-107 (GVVGD), 127-128 (TT), K140, K149, and 167-170 (CLQT). E182, H245, and H262 together coordinate Zn(2+).

This sequence belongs to the sugar phosphate cyclases superfamily. Dehydroquinate synthase family. Requires Co(2+) as cofactor. Zn(2+) is required as a cofactor. The cofactor is NAD(+).

The protein localises to the cytoplasm. The catalysed reaction is 7-phospho-2-dehydro-3-deoxy-D-arabino-heptonate = 3-dehydroquinate + phosphate. It participates in metabolic intermediate biosynthesis; chorismate biosynthesis; chorismate from D-erythrose 4-phosphate and phosphoenolpyruvate: step 2/7. Its function is as follows. Catalyzes the conversion of 3-deoxy-D-arabino-heptulosonate 7-phosphate (DAHP) to dehydroquinate (DHQ). The protein is 3-dehydroquinate synthase of Idiomarina loihiensis (strain ATCC BAA-735 / DSM 15497 / L2-TR).